Consider the following 133-residue polypeptide: UPF0292 protein TK1411 (133 aa).

The Toprim domain maps to 20 to 100 (EGALIVEGLR…SVDIETWKEL (81 aa)). Glu-26, Asp-69, and Asp-71 together coordinate Mg(2+).

Belongs to the UPF0292 family. Mg(2+) serves as cofactor.

In Thermococcus kodakarensis (strain ATCC BAA-918 / JCM 12380 / KOD1) (Pyrococcus kodakaraensis (strain KOD1)), this protein is UPF0292 protein TK1411.